The following is a 1006-amino-acid chain: DNA polymerase (1006 aa).

Belongs to the DNA polymerase type-B family. As to quaternary structure, interacts with OPG148. Component of the Uracil-DNA glycosylase(UDG)-OPG148-polymerase complex; OPG148 and OPG116/UDG form a heterodimeric processivity factor that associates with OPG071 to form the processive polymerase holoenzyme.

The catalysed reaction is DNA(n) + a 2'-deoxyribonucleoside 5'-triphosphate = DNA(n+1) + diphosphate. Catalyzes DNA synthesis. Acquires processivity by associating with a heterodimeric processivity factor comprised of the viral OPG148 and OPG116 proteins, thereby forming the DNA polymerase holoenzyme. Displays 3'- to 5' exonuclease activity. Might participate in viral DNA recombination. Does not perform OPG116/D4synthesis across an abasic site. The protein is DNA polymerase (OPG071) of Homo sapiens (Human).